Consider the following 118-residue polypeptide: Protein Rev (118 aa).

A phosphoserine; by host CK2 mark is found at serine 5 and serine 8. Positions 18–28 (LIKFLYQSSSD) are homomultimerization. The tract at residues 23–52 (YQSSSDPPPNPGGTRQARRNRRRRWRERQR) is disordered. Residues 36–52 (TRQARRNRRRRWRERQR) carry the Nuclear localization signal and RNA-binding (RRE) motif. Residues 38–49 (QARRNRRRRWRE) show a composition bias toward basic residues. The Nuclear export signal and binding to XPO1 motif lies at 75 to 86 (LQLPPLERLTLD). The segment at 92 to 118 (GTSGTQGVGSPQILVESPTVLESGTKE) is disordered. Phosphoserine; by host occurs at positions 94 and 101.

The protein belongs to the HIV-1 REV protein family. In terms of assembly, homomultimer; when bound to the RRE. Multimeric assembly is essential for activity and may involve XPO1. Binds to human KPNB1, XPO1, TNPO1, RANBP5 and IPO7. Interacts with the viral Integrase. Interacts with human KHDRBS1. Interacts with human NAP1; this interaction decreases Rev multimerization and stimulates its activity. Interacts with human DEAD-box helicases DDX3 and DDX24; these interactions may serve for viral RNA export to the cytoplasm and packaging, respectively. Interacts with human PSIP1; this interaction may inhibit HIV-1 DNA integration by promoting dissociation of the Integrase-LEDGF/p75 complex. Post-translationally, asymmetrically arginine dimethylated at one site by host PRMT6. Methylation impairs the RNA-binding activity and export of viral RNA from the nucleus to the cytoplasm. Phosphorylated by protein kinase CK2. Presence of, and maybe binding to the N-terminus of the regulatory beta subunit of CK2 is necessary for CK2-mediated Rev's phosphorylation.

It is found in the host nucleus. The protein localises to the host nucleolus. It localises to the host cytoplasm. Escorts unspliced or incompletely spliced viral pre-mRNAs (late transcripts) out of the nucleus of infected cells. These pre-mRNAs carry a recognition sequence called Rev responsive element (RRE) located in the env gene, that is not present in fully spliced viral mRNAs (early transcripts). This function is essential since most viral proteins are translated from unspliced or partially spliced pre-mRNAs which cannot exit the nucleus by the pathway used by fully processed cellular mRNAs. Rev itself is translated from a fully spliced mRNA that readily exits the nucleus. Rev's nuclear localization signal (NLS) binds directly to KPNB1/Importin beta-1 without previous binding to KPNA1/Importin alpha-1. KPNB1 binds to the GDP bound form of RAN (Ran-GDP) and targets Rev to the nucleus. In the nucleus, the conversion from Ran-GDP to Ran-GTP dissociates Rev from KPNB1 and allows Rev's binding to the RRE in viral pre-mRNAs. Rev multimerization on the RRE via cooperative assembly exposes its nuclear export signal (NES) to the surface. Rev can then form a complex with XPO1/CRM1 and Ran-GTP, leading to nuclear export of the complex. Conversion from Ran-GTP to Ran-GDP mediates dissociation of the Rev/RRE/XPO1/RAN complex, so that Rev can return to the nucleus for a subsequent round of export. Beside KPNB1, also seems to interact with TNPO1/Transportin-1, RANBP5/IPO5 and IPO7/RANBP7 for nuclear import. The nucleoporin-like HRB/RIP is an essential cofactor that probably indirectly interacts with Rev to release HIV RNAs from the perinuclear region to the cytoplasm. The polypeptide is Protein Rev (Human immunodeficiency virus type 1 group M subtype B (isolate LW123) (HIV-1)).